A 312-amino-acid polypeptide reads, in one-letter code: Ribosomal RNA small subunit methyltransferase H (312 aa).

Residues 35–37 (GGH), D55, F85, D101, and Q108 each bind S-adenosyl-L-methionine.

This sequence belongs to the methyltransferase superfamily. RsmH family.

Its subcellular location is the cytoplasm. It carries out the reaction cytidine(1402) in 16S rRNA + S-adenosyl-L-methionine = N(4)-methylcytidine(1402) in 16S rRNA + S-adenosyl-L-homocysteine + H(+). Specifically methylates the N4 position of cytidine in position 1402 (C1402) of 16S rRNA. This is Ribosomal RNA small subunit methyltransferase H from Buchnera aphidicola subsp. Acyrthosiphon pisum (strain Tuc7).